The chain runs to 574 residues: Zinc finger and BTB domain-containing protein 3 (574 aa).

One can recognise a BTB domain in the interval 74-142; that stretch reads CDCTVMVGST…MYAGQLTLRG (69 aa). Disordered stretches follow at residues 175–277 and 305–346; these read AEAD…SSTE and SLRV…APAP. Glycyl lysine isopeptide (Lys-Gly) (interchain with G-Cter in SUMO2) cross-links involve residues K181 and K182. A compositionally biased stretch (polar residues) spans 187–212; it reads NSQLPSLEFLSSTSRGTQPSLASAET. Residues 323–334 are compositionally biased toward low complexity; that stretch reads PPASAPTSAPAP. S362 is subject to Phosphoserine. The tract at residues 364–403 is disordered; that stretch reads EETDVSDEQPQGPERAFPSGGAVYGAQPSQPEAFEDPGAA. 2 consecutive C2H2-type zinc fingers follow at residues 472-494 and 500-523; these read PTCK…ATVH and YECR…RKAH. Basic and acidic residues predominate over residues 526 to 535; sequence DLAKRSKPDP. The interval 526-574 is disordered; sequence DLAKRSKPDPEVGPLLGVQPLPGSPTADRQSSSGGGPPKDFVLAPKTNI. K532 participates in a covalent cross-link: Glycyl lysine isopeptide (Lys-Gly) (interchain with G-Cter in SUMO2). S549 carries the phosphoserine modification.

It is found in the nucleus. Its function is as follows. May be involved in transcriptional regulation. The polypeptide is Zinc finger and BTB domain-containing protein 3 (ZBTB3) (Homo sapiens (Human)).